The sequence spans 271 residues: Tropinone reductase homolog At2g29360 (271 aa).

22-46 lines the NADP(+) pocket; that stretch reads LVTGGSKGIGEAVVEELATLGARIH. S155 provides a ligand contact to substrate. Y168 serves as the catalytic Proton acceptor.

This sequence belongs to the short-chain dehydrogenases/reductases (SDR) family. SDR65C subfamily.

Functionally, oxidoreductase active on cyclic ketones, but not on tropinone or nortropinone. The protein is Tropinone reductase homolog At2g29360 of Arabidopsis thaliana (Mouse-ear cress).